We begin with the raw amino-acid sequence, 317 residues long: Phosphopantothenate--cysteine ligase 1 (317 aa).

The protein belongs to the PPC synthetase family. Homodimer.

It carries out the reaction (R)-4'-phosphopantothenate + L-cysteine + ATP = N-[(R)-4-phosphopantothenoyl]-L-cysteine + AMP + diphosphate + H(+). It functions in the pathway cofactor biosynthesis; coenzyme A biosynthesis; CoA from (R)-pantothenate: step 2/5. Functionally, catalyzes the first step in the biosynthesis of coenzyme A from vitamin B5/pantothenate, where cysteine is conjugated to 4'-phosphopantothenate to form 4-phosphopantothenoylcysteine. The catalytic activity is not CTP- but ATP-dependent. The chain is Phosphopantothenate--cysteine ligase 1 (PPCS1) from Arabidopsis thaliana (Mouse-ear cress).